The sequence spans 88 residues: RNA-binding protein Hfq (88 aa).

The Sm domain occupies 9–68; sequence DPFLNALRRERIPVSIYLVNGIKLQGQIESFDQFVILLKNTVNQMVYKHAISTVVPARAV. The disordered stretch occupies residues 66 to 88; that stretch reads RAVSHHSASDRPQGERPQEKTEE. Residues 72 to 88 are compositionally biased toward basic and acidic residues; sequence SASDRPQGERPQEKTEE.

Belongs to the Hfq family. Homohexamer.

RNA chaperone that binds small regulatory RNA (sRNAs) and mRNAs to facilitate mRNA translational regulation in response to envelope stress, environmental stress and changes in metabolite concentrations. Also binds with high specificity to tRNAs. The polypeptide is RNA-binding protein Hfq (Aliivibrio fischeri (strain ATCC 700601 / ES114) (Vibrio fischeri)).